A 121-amino-acid chain; its full sequence is Putative iron-sulfur cluster insertion protein ErpA 1 (121 aa).

Positions 49, 113, and 115 each coordinate iron-sulfur cluster.

The protein belongs to the HesB/IscA family. In terms of assembly, homodimer. Requires iron-sulfur cluster as cofactor.

Required for insertion of 4Fe-4S clusters. In Polaromonas naphthalenivorans (strain CJ2), this protein is Putative iron-sulfur cluster insertion protein ErpA 1.